The following is a 202-amino-acid chain: Snake venom metalloproteinase fibrolase (202 aa).

The region spanning 6 to 202 (RYIELVIVAD…HNPQCILNQP (197 aa)) is the Peptidase M12B domain. Position 9 (E9) interacts with Ca(2+). A glycan (N-linked (GlcNAc...) asparagine) is linked at N25. D93 contributes to the Ca(2+) binding site. 3 disulfide bridges follow: C117–C197, C157–C181, and C159–C164. H142 serves as a coordination point for Zn(2+). The active site involves E143. Residues H146 and H152 each coordinate Zn(2+). Ca(2+) is bound by residues C197 and N200.

This sequence belongs to the venom metalloproteinase (M12B) family. P-I subfamily. Monomer. Requires Zn(2+) as cofactor. Glycosylated. In terms of tissue distribution, expressed by the venom gland.

It localises to the secreted. It catalyses the reaction Hydrolysis of 14-Ala-|-Leu-15 in insulin B chain and 413-Lys-|-Leu-414 in alpha-chain of fibrinogen.. Its activity is regulated as follows. Activated by calcium and magnesium ions. Inhibited by EDTA, DTT and L-cysteine. Activity is not affected by PMSF or heparin. Functionally, has fibrino(geno)lytic activity on the alpha and beta chains of fibrinogen (FGA and FGB). Inhibits human ADP- and collagen-induced platelet aggregation on platelet-rich plasma but does not affect the thrombin-induced aggregation of rabbit washed platelets. Slightly degrades plasminogen. The polypeptide is Snake venom metalloproteinase fibrolase (Macrovipera lebetinus (Levantine viper)).